A 273-amino-acid chain; its full sequence is Phosphatidylglycerol--prolipoprotein diacylglyceryl transferase (273 aa).

7 consecutive transmembrane segments (helical) span residues 21–41, 60–80, 95–115, 124–144, 176–196, 203–223, and 236–256; these read ISVR…LWLA, LLFA…VLFY, VWTG…AMLW, FFGV…MGRM, SQLY…NWFI, GSVS…VEYV, and FISM…LMMV. Arg143 contributes to the a 1,2-diacyl-sn-glycero-3-phospho-(1'-sn-glycerol) binding site.

This sequence belongs to the Lgt family.

It is found in the cell inner membrane. It carries out the reaction L-cysteinyl-[prolipoprotein] + a 1,2-diacyl-sn-glycero-3-phospho-(1'-sn-glycerol) = an S-1,2-diacyl-sn-glyceryl-L-cysteinyl-[prolipoprotein] + sn-glycerol 1-phosphate + H(+). Its pathway is protein modification; lipoprotein biosynthesis (diacylglyceryl transfer). Functionally, catalyzes the transfer of the diacylglyceryl group from phosphatidylglycerol to the sulfhydryl group of the N-terminal cysteine of a prolipoprotein, the first step in the formation of mature lipoproteins. This Vibrio atlanticus (strain LGP32) (Vibrio splendidus (strain Mel32)) protein is Phosphatidylglycerol--prolipoprotein diacylglyceryl transferase.